The sequence spans 258 residues: Chemokine-binding protein (258 aa).

A signal peptide spans 1–17 (MKQYIVLACMCLAAAAM). Residues 65-93 (TEITESESDPDPEVESEDDSTSVEDVDPP) are disordered. Residues 68 to 91 (TESESDPDPEVESEDDSTSVEDVD) are compositionally biased toward acidic residues.

Belongs to the orthopoxvirus OPG001 family. Binds to host CC chemokines, such as RANTES/CCL5, MIP-1alpha/CCL3, MCP-1/CCL2 and eotaxin.

It is found in the secreted. In terms of biological role, inhibits host immune defense by binding to host chemokines. Binds host CC chemokines (beta chemokines) such as RANTES with high affinity, but not CXC or C chemokines (alpha and gamma chemokines). In Homo sapiens (Human), this protein is Chemokine-binding protein (OPG001).